We begin with the raw amino-acid sequence, 914 residues long: Linoleate 13S-lipoxygenase 3-1, chloroplastic (914 aa).

The N-terminal 83 residues, 1-83 (MALAKEIMGI…PEKAVRFKVR (83 aa)), are a transit peptide targeting the chloroplast. One can recognise a PLAT domain in the interval 96 to 218 (LKETIVKHLD…DHPGKRIFFS (123 aa)). The Lipoxygenase domain occupies 221-914 (PYLPDETPAG…CRGVPNSVSI (694 aa)). Fe cation is bound by residues histidine 574, histidine 579, histidine 765, asparagine 769, and isoleucine 914.

The protein belongs to the lipoxygenase family. Monomer. The cofactor is Fe cation. In terms of tissue distribution, expressed in roots and leaves. Detected in tubers and flower buds.

It localises to the plastid. It is found in the chloroplast stroma. Its subcellular location is the chloroplast thylakoid. The enzyme catalyses (9Z,12Z)-octadecadienoate + O2 = (13S)-hydroperoxy-(9Z,11E)-octadecadienoate. It catalyses the reaction (9Z,12Z,15Z)-octadecatrienoate + O2 = (13S)-hydroperoxy-(9Z,11E,15Z)-octadecatrienoate. It participates in lipid metabolism; oxylipin biosynthesis. In terms of biological role, plant lipoxygenases may be involved in a number of diverse aspects of plant physiology including growth and development, pest resistance, and senescence or responses to wounding. Required for the regulation of wound-induced gene expression, but is not involved in the bulk production of jasmonate upon wounding. Catalyzes the hydroperoxidation of lipids containing a cis,cis-1,4-pentadiene structure. Linolenic acid is the preferred substrate, before linoleic and arachidonic acids. The protein is Linoleate 13S-lipoxygenase 3-1, chloroplastic (LOX3.1) of Solanum tuberosum (Potato).